The primary structure comprises 445 residues: ATPase PAAT (445 aa).

A phosphoserine mark is found at Ser-177, Ser-182, Ser-254, and Ser-302. A disordered region spans residues 426–445; the sequence is PTGIPLRHYDSGERLSNGER. The segment covering 432–445 has biased composition (basic and acidic residues); the sequence is RHYDSGERLSNGER.

In terms of assembly, homodimer. Interacts with ABCB7, ABCB8/MITOSUR and ABCB10.

The protein resides in the cytoplasm. It is found in the mitochondrion. The catalysed reaction is ATP + H2O = ADP + phosphate + H(+). ATPase that regulates mitochondrial ABC transporters ABCB7, ABCB8/MITOSUR and ABCB10. Regulates mitochondrial ferric concentration and heme biosynthesis and plays a role in the maintenance of mitochondrial homeostasis and cell survival. The sequence is that of ATPase PAAT from Homo sapiens (Human).